Consider the following 87-residue polypeptide: Small ribosomal subunit protein bS20 (87 aa).

The disordered stretch occupies residues 1 to 26 (MANHKSAIKRHKQSQKRAARNRAAKT).

Belongs to the bacterial ribosomal protein bS20 family.

Its function is as follows. Binds directly to 16S ribosomal RNA. This Nitratidesulfovibrio vulgaris (strain DSM 19637 / Miyazaki F) (Desulfovibrio vulgaris) protein is Small ribosomal subunit protein bS20.